The chain runs to 103 residues: Large ribosomal subunit protein bL21 (103 aa).

The protein belongs to the bacterial ribosomal protein bL21 family. As to quaternary structure, part of the 50S ribosomal subunit. Contacts protein L20.

In terms of biological role, this protein binds to 23S rRNA in the presence of protein L20. The protein is Large ribosomal subunit protein bL21 of Lactobacillus acidophilus (strain ATCC 700396 / NCK56 / N2 / NCFM).